We begin with the raw amino-acid sequence, 624 residues long: Ubiquilin-2 (624 aa).

2 disordered regions span residues 1 to 32 and 106 to 141; these read MAENGESSGPPRPSRGPAAAQGSAAAPAEPKI and NRPQGQSTQPSNAAGTNTTSASTPRSNSTPISTNSN. Ala-2 carries the post-translational modification N-acetylalanine. Over residues 15–32 the composition is skewed to low complexity; sequence RGPAAAQGSAAAPAEPKI. Positions 33 to 107 constitute a Ubiquitin-like domain; sequence IKVTVKTPKE…VHLVIKSQNR (75 aa). Polar residues predominate over residues 106 to 115; that stretch reads NRPQGQSTQP. A compositionally biased stretch (low complexity) spans 116 to 141; it reads SNAAGTNTTSASTPRSNSTPISTNSN. 2 STI1 domains span residues 178–206 and 208–247; these read SPEMMIQIMENPFVQSMLSNPDLMRQLIM and NPQMQQLIQRNPEISHLLNNPDIMRQTLEIARNPAMMQEM. The interval 287 to 349 is disordered; that stretch reads FGGNPFASVG…SGSGNSSSNA (63 aa). Over residues 294–304 the composition is skewed to low complexity; it reads SVGSSSSSGEG. Residues 316 to 325 are compositionally biased toward pro residues; the sequence is LPNPWAPPPA. Residues 326 to 349 show a composition bias toward low complexity; sequence TQSSATTSTTTSTGSGSGNSSSNA. STI1 domains lie at 379–426 and 430–462; these read NPQL…QEQM and LPAFLQQMQNPDTLSAMSNPRAMQALMQIQQGL. 12 tandem repeats follow at residues 491 to 493, 494 to 496, 497 to 499, 500 to 502, 503 to 505, 506 to 508, 509 to 511, 512 to 514, 515 to 517, 518 to 520, 521 to 523, and 524 to 526. Residues 491-526 are 12 X 3 AA tandem repeats of P-X-X; the sequence is PVGPVTPIGPIGPIVPFTPIGPIGPIGPTGPAAPPG. Residues 512 to 556 form a disordered region; that stretch reads PIGPIGPTGPAAPPGSTGSGGPTGPTVSSAAPSETTSPTSESGPN. The span at 535–553 shows a compositional bias: low complexity; that stretch reads GPTVSSAAPSETTSPTSES. Residues 581 to 621 enclose the UBA domain; sequence RFQQQLEQLNAMGFLNREANLQALIATGGDINAAIERLLGS.

As to quaternary structure, homodimer. Forms heterodimer with UBQLN1. Binds UBE3A and BTRC. Interacts with the 19S proteasome subunit. Interacts with C9orf72. Interacts with HNRNPA1 and HNRNPU. Found in a complex with UBQLN1 and MAP1LC3A/B/C. Interacts with EPS15, EPN1 and EPN2. Interacts with HERPUD1. Interacts with RAD23A. Interacts with TARDBP. Interacts (via C-terminus) with FAF2 (via N-terminus). Interacts with UBQLN4. Binds CD47. Degraded during macroautophagy.

It localises to the cytoplasm. It is found in the nucleus. The protein localises to the membrane. The protein resides in the cytoplasmic vesicle. Its subcellular location is the autophagosome. Plays an important role in the regulation of different protein degradation mechanisms and pathways including ubiquitin-proteasome system (UPS), autophagy and the endoplasmic reticulum-associated protein degradation (ERAD) pathway. Mediates the proteasomal targeting of misfolded or accumulated proteins for degradation by binding (via UBA domain) to their polyubiquitin chains and by interacting (via ubiquitin-like domain) with the subunits of the proteasome. Plays a role in the ERAD pathway via its interaction with ER-localized proteins FAF2/UBXD8 and HERPUD1 and may form a link between the polyubiquitinated ERAD substrates and the proteasome. Involved in the regulation of macroautophagy and autophagosome formation; required for maturation of autophagy-related protein LC3 from the cytosolic form LC3-I to the membrane-bound form LC3-II and may assist in the maturation of autophagosomes to autolysosomes by mediating autophagosome-lysosome fusion. Negatively regulates the endocytosis of GPCR receptors: AVPR2 and ADRB2, by specifically reducing the rate at which receptor-arrestin complexes concentrate in clathrin-coated pits (CCPs). The polypeptide is Ubiquilin-2 (UBQLN2) (Homo sapiens (Human)).